Consider the following 141-residue polypeptide: ATP synthase epsilon chain (141 aa).

It belongs to the ATPase epsilon chain family. In terms of assembly, F-type ATPases have 2 components, CF(1) - the catalytic core - and CF(0) - the membrane proton channel. CF(1) has five subunits: alpha(3), beta(3), gamma(1), delta(1), epsilon(1). CF(0) has three main subunits: a, b and c.

The protein localises to the cell inner membrane. Functionally, produces ATP from ADP in the presence of a proton gradient across the membrane. This Pseudomonas fluorescens (strain ATCC BAA-477 / NRRL B-23932 / Pf-5) protein is ATP synthase epsilon chain.